The primary structure comprises 132 residues: Small ribosomal subunit protein uS8 (132 aa).

Belongs to the universal ribosomal protein uS8 family. Part of the 30S ribosomal subunit. Contacts proteins S5 and S12.

In terms of biological role, one of the primary rRNA binding proteins, it binds directly to 16S rRNA central domain where it helps coordinate assembly of the platform of the 30S subunit. This Afipia carboxidovorans (strain ATCC 49405 / DSM 1227 / KCTC 32145 / OM5) (Oligotropha carboxidovorans) protein is Small ribosomal subunit protein uS8.